The following is an 856-amino-acid chain: Putative zinc protease C28F5.4 (856 aa).

His71 contacts Zn(2+). The active-site Proton acceptor is Glu74. Residues His75 and Glu152 each coordinate Zn(2+).

It belongs to the peptidase M16 family.

This Caenorhabditis elegans protein is Putative zinc protease C28F5.4.